The chain runs to 668 residues: Probable 6-phosphofructo-2-kinase PB17E12.14c (668 aa).

Over residues 1–14 (MSNNNNKDDSELQS) the composition is skewed to basic and acidic residues. Disordered stretches follow at residues 1-105 (MSNN…GSRP) and 136-185 (HRVP…EATN). Polar residues-rich tracts occupy residues 46–56 (NDHSFTNTDSV), 65–86 (SPVSTLTSNSANFSDSSLQNSP), and 164–184 (SSMSIPGQTSIVSSNNGSEAT). 197–204 (GLPARGKS) is a binding site for ATP. Catalysis depends on residues D281 and C312. Position 346 (R346) interacts with beta-D-fructose 6-phosphate. E540 is a catalytic residue. The active-site Proton donor is H608.

The catalysed reaction is beta-D-fructose 6-phosphate + ATP = beta-D-fructose 2,6-bisphosphate + ADP + H(+). Functionally, synthesis of fructose 2,6-bisphosphate. The chain is Probable 6-phosphofructo-2-kinase PB17E12.14c from Schizosaccharomyces pombe (strain 972 / ATCC 24843) (Fission yeast).